We begin with the raw amino-acid sequence, 265 residues long: Type II pantothenate kinase (265 aa).

An ATP-binding site is contributed by 6–13 (DAGGTLIK). Catalysis depends on Glu70, which acts as the Proton acceptor. Residues Thr99, 121 to 125 (GGMIQ), Tyr137, and Ser225 contribute to the ATP site.

The protein belongs to the type II pantothenate kinase family. Homodimer.

It localises to the cytoplasm. It carries out the reaction (R)-pantothenate + ATP = (R)-4'-phosphopantothenate + ADP + H(+). It functions in the pathway cofactor biosynthesis; coenzyme A biosynthesis; CoA from (R)-pantothenate: step 1/5. Functionally, catalyzes the phosphorylation of pantothenate (Pan), the first step in CoA biosynthesis. The sequence is that of Type II pantothenate kinase from Staphylococcus saprophyticus subsp. saprophyticus (strain ATCC 15305 / DSM 20229 / NCIMB 8711 / NCTC 7292 / S-41).